Consider the following 906-residue polypeptide: Cadherin-2A (906 aa).

Positions 1 to 28 (MCRKEPFLLPTALCILAALVLHQGPVEA) are cleaved as a signal peptide. A propeptide spanning residues 29-160 (LGGSRLCKTG…KHNGLQRQKR (132 aa)) is cleaved from the precursor. Cadherin domains are found at residues 161-268 (DWVI…RPEF), 269-383 (LHQI…PPEF), 384-498 (TAMT…NPYF), 499-604 (TPNP…DNAP), and 605-714 (YVYP…TTAP). The Extracellular portion of the chain corresponds to 161–724 (DWVIPPINVP…IIGTGLGTGA (564 aa)). Residues Glu171, Asp227, Glu229, Asp260, Met261, Asn262, Asp263, and Asn264 each contribute to the Ca(2+) site. Residue Asn274 is glycosylated (N-linked (GlcNAc...) asparagine). Residues Asp294, Asp296, and Asn302 each coordinate Ca(2+). N-linked (GlcNAc...) asparagine glycosylation occurs at Asn326. Asp354 is a binding site for Ca(2+). N-linked (GlcNAc...) asparagine glycans are attached at residues Asn403, Asn573, Asn623, Asn652, and Asn693. Residues 725–746 (IIAILLCIIILLTLVLMFVVWM) traverse the membrane as a helical segment. Residues 747-906 (KRRDKERQAK…LADMYGGSDD (160 aa)) are Cytoplasmic-facing. Disordered regions lie at residues 775–800 (EEGG…EPDT) and 863–884 (SGST…EQDY). Positions 776-785 (EGGGEEDQDY) are enriched in acidic residues. The span at 863-880 (SGSTAGSLSSLNSSSSGG) shows a compositional bias: low complexity.

In terms of assembly, homodimer (via extracellular region). Can also form heterodimers with other cadherins (via extracellular region). Dimerization occurs in trans, i.e. with a cadherin chain from another cell.

It localises to the cell membrane. The protein localises to the sarcolemma. It is found in the cell junction. The protein resides in the cell surface. Its subcellular location is the desmosome. It localises to the adherens junction. In terms of biological role, calcium-dependent cell adhesion protein; preferentially mediates homotypic cell-cell adhesion. Cadherins may thus contribute to the sorting of heterogeneous cell types, and thereby play an important role during embryonic development. Required for proper neurite branching. Required for pre- and postsynaptic organization. This is Cadherin-2A (cdh2-a) from Xenopus laevis (African clawed frog).